We begin with the raw amino-acid sequence, 281 residues long: N-methyltransferase tcpN (281 aa).

Belongs to the methyltransferase superfamily. LaeA methyltransferase family.

It functions in the pathway secondary metabolite biosynthesis. Functionally, N-methyltransferase; part of the gene cluster that mediates the biosynthesis of an unusual class of epipolythiodioxopiperazines (ETPs) lacking the reactive thiol group important for toxicity. Firstly, L-tyrosine is prenylated by tcpD, before undergoing condensation with L-glycine in a reaction catalyzed by the NRPS tcpP leading to the diketopiperazine (DKP) backbone. Afterwards the alpha-carbon of tyrosine is oxidized by the cytochrome P450 tcpC to form a hydroxyl group. However, in contrast other ETP biosynthesis pathways studied so far, tcpC is not able to bishydroxylate the DKP at both alpha-carbon positions, but hydroxylates the alpha-carbon of the tyrosine part and the nitrogen of the glycine part. The next steps involve an alpha,beta-elimination reaction catalyzed by tcpI, a methylation by the methyltransferase tcpN the action of the four enzyme cascade tcpG/K/J/I. Due to a dysfunctional cytochrome P450 monooxygenase tcpC, the pathway leads to the biosynthesis of probable non-toxic metabolites lacking the reactive thiol group. This Claviceps purpurea (strain 20.1) (Ergot fungus) protein is N-methyltransferase tcpN.